The following is a 1207-amino-acid chain: RNA-binding protein 20 (1207 aa).

The disordered stretch occupies residues 1-58 (MVLAAAMSQDADPSGPEQPDRDACIVPGVQGPPAPQGQQGMQPLPPPLPPPPQPQSSL). Positions 43–54 (PLPPPLPPPPQP) are enriched in pro residues. Residues 412–446 (HLPHICSICDKKVFDLKDWELHVKGKLHAQKCLLF) form a U1-type zinc finger. Positions 521-596 (RVVHICNLPE…EKLLIRMSTR (76 aa)) constitute an RRM domain. Residues 625 to 637 (LREADRYGPERPR) are compositionally biased toward basic and acidic residues. Disordered stretches follow at residues 625–686 (LREA…NGED), 722–896 (EKYL…MEEL), and 951–1110 (QGET…AELK). Residues 631 to 650 (YGPERPRSRSPMSRSLSPRS) are RS. 5 positions are modified to phosphoserine: S638, S640, S643, S645, and S652. The segment covering 639-650 (RSPMSRSLSPRS) has biased composition (low complexity). Over residues 668-686 (YAWRDEDRETVPRRENGED) the composition is skewed to basic and acidic residues. A Phosphoserine modification is found at S729. Basic and acidic residues-rich tracts occupy residues 740-759 (KGRE…DKHP), 772-789 (RKEE…PEDS), and 796-836 (EPKV…RGAE). S789 bears the Phosphoserine mark. A compositionally biased stretch (acidic residues) spans 839–848 (AGTEEQEGME). A phosphoserine mark is found at S853 and S864. Polar residues predominate over residues 853–863 (SVGTQQEGTES). A compositionally biased stretch (basic and acidic residues) spans 867-876 (ENTRTKKGQD). Phosphoserine is present on residues S879, S881, and S963. Residues 970–979 (VPSTSTSCPN) are compositionally biased toward polar residues. S999 is subject to Phosphoserine. Basic and acidic residues predominate over residues 1011–1022 (YEKEARGAEGSD). S1034, S1046, S1057, S1066, S1078, S1096, and S1101 each carry phosphoserine. Residues 1050–1072 (DDCKARGSPEDGPHEVSPLEEKA) are compositionally biased toward basic and acidic residues. A compositionally biased stretch (polar residues) spans 1073–1102 (SPTTESDLQSQACQENSRYTETRSLNSRSP). The Matrin-type zinc-finger motif lies at 1141-1172 (FYCKLCGLFYTSEEAAKVSHCRSTVHYRNLQK). The tract at residues 1181–1207 (GLKETEGVDSPSPERSGIGPHLERKKL) is disordered. Phosphoserine is present on residues S1190 and S1192.

Associates with components of the U1 and U2 U1 small nuclear ribonucleoprotein complexes. In terms of processing, phosphorylation regulates the subcellular localization. Phosphorylation of Ser-638 and Ser-640 in the RS (arginine/serine-rich) region promotes nuclear localization of the protein. In contrast, phosphorylation of the C-terminal disordered region promotes localization to cytoplasmic ribonucleoprotein granules.

Its subcellular location is the nucleus. The protein localises to the cytoplasm. It is found in the cytoplasmic ribonucleoprotein granule. RNA-binding protein that acts as a regulator of mRNA splicing of a subset of genes encoding key structural proteins involved in cardiac development, such as TTN (Titin), CACNA1C, CAMK2D or PDLIM5/ENH. Acts as a repressor of mRNA splicing: specifically binds the 5'UCUU-3' motif that is predominantly found within intronic sequences of pre-mRNAs, leading to the exclusion of specific exons in target transcripts. RBM20-mediated exon skipping is hormone-dependent and is essential for TTN isoform transition in both cardiac and skeletal muscles. RBM20-mediated exon skipping of TTN provides substrates for the formation of circular RNA (circRNAs) from the TTN transcripts. Together with RBM24, promotes the expression of short isoforms of PDLIM5/ENH in cardiomyocytes. The polypeptide is RNA-binding protein 20 (Rattus norvegicus (Rat)).